A 696-amino-acid polypeptide reads, in one-letter code: Polyribonucleotide nucleotidyltransferase (696 aa).

Mg(2+)-binding residues include Asp-483 and Asp-489. Residues 550-609 form the KH domain; the sequence is PRITTIYVKTDKIRDVIGSGGKNIRGITEATGVTIDIDDTGKINIASTDKAACDLAIKMI. Positions 619-687 constitute an S1 motif domain; the sequence is GKLYMGLVKK…KQGKIKLSRK (69 aa).

This sequence belongs to the polyribonucleotide nucleotidyltransferase family. Requires Mg(2+) as cofactor.

It localises to the cytoplasm. The enzyme catalyses RNA(n+1) + phosphate = RNA(n) + a ribonucleoside 5'-diphosphate. Functionally, involved in mRNA degradation. Catalyzes the phosphorolysis of single-stranded polyribonucleotides processively in the 3'- to 5'-direction. The sequence is that of Polyribonucleotide nucleotidyltransferase from Geotalea uraniireducens (strain Rf4) (Geobacter uraniireducens).